An 815-amino-acid polypeptide reads, in one-letter code: MSGLDVRGAVSFAERTKSVDALTKKEILSALNSGEVSETSEDARFRVRELVLPDGESYSGSLLGNVPEGPGKYIWSDGCVYDGEWRRGMRHGIGNMRWASGASYDGEFSGGYMHGSGTYVDANKLTYKGRWRLNLKHGLGYQVYPNGDVFEGSWIQGLGEGPGKYTWANKNVYLGDMKGGKMSGKGTLTWVTGDSYEGSWLNGMMHGVGVYTWSDGGCYVGTWTRGLKDGKGSFYSAGTRVPVVQEFYLNALRKRGVLPDMRRQNQVASSVNMENLRVGVNRNKLSKGSLINLEQSRNGRVSLERRWSLEVSIEKVIGHGYSDLSTAVLDSGSSVQYKANIPILEREYMQGVLISELVVNNGFSRTSRRAKRKHKRLVKEAKKPGEVVIKGHRSYDLMLSLQLGIRYTVGKITPIQRRQVRTADFGPRASFWMTFPRAGSTMTPPHHSEDFKWKDYCPMVFRNLREMFKIDAADYMMSICGNDTLRELSSPGKSGSVFFLSQDDRFMIKTLRKSEVKVLLRMLPDYHHHVKTYENTLITKFFGLHRIKPSSGQKFRFVVMGNMFFTDLRIHRRFDLKGSSLGRSADKVEIDENTILKDLDLNYSFFLETSWREGLLRQLEIDSKFLEAQNIMDYSLLLGVHHRAPQHLRSQLVRSQSITTDALESVAEDDTIEDDMLSYHEGLVLVPRGSENTVTGPHIRGSRLRASAVGDEEVDLLLPGTARLQIQQGVNMPARAELIPGREDKEKQILHDCCDVVLYLGIIDILQEYNMTKKIEHAYKSLHFDSLSISAVDPTFYSQRFLEFIKKVFPQNNKS.

MORN repeat units lie at residues 58–80 (YSGS…DGCV), 81–103 (YDGE…SGAS), 104–126 (YDGE…NKLT), 127–149 (YKGR…NGDV), 150–172 (FEGS…NKNV), 173–195 (YLGD…TGDS), 196–218 (YEGS…DGGC), and 219–240 (YVGT…AGTR). The PIPK domain maps to 391 to 809 (GHRSYDLMLS…RFLEFIKKVF (419 aa)). Residues 769–790 (YNMTKKIEHAYKSLHFDSLSIS) form an activation loop region.

In terms of assembly, interacts with CINV1. In terms of tissue distribution, widely expressed.

The protein resides in the membrane. It localises to the nucleus. It catalyses the reaction a 1,2-diacyl-sn-glycero-3-phospho-(1D-myo-inositol 4-phosphate) + ATP = a 1,2-diacyl-sn-glycero-3-phospho-(1D-myo-inositol-4,5-bisphosphate) + ADP + H(+). Its function is as follows. Plays a role in sugar-mediated root development. Interaction with CINV1 induces repression of CINV1 activity and negative regulation of sugar-mediated root cell elongation. The protein is Phosphatidylinositol 4-phosphate 5-kinase 9 (PIP5K9) of Arabidopsis thaliana (Mouse-ear cress).